A 264-amino-acid chain; its full sequence is Thymidylate synthase (264 aa).

Arg21 is a dUMP binding site. His51 contacts (6R)-5,10-methylene-5,6,7,8-tetrahydrofolate. A dUMP-binding site is contributed by 126 to 127; the sequence is RR. Cys146 serves as the catalytic Nucleophile. Residues 166–169, Asn177, and 207–209 each bind dUMP; these read RSAD and HLY. Position 169 (Asp169) interacts with (6R)-5,10-methylene-5,6,7,8-tetrahydrofolate. Ala263 is a (6R)-5,10-methylene-5,6,7,8-tetrahydrofolate binding site.

Belongs to the thymidylate synthase family. Bacterial-type ThyA subfamily. In terms of assembly, homodimer.

Its subcellular location is the cytoplasm. It catalyses the reaction dUMP + (6R)-5,10-methylene-5,6,7,8-tetrahydrofolate = 7,8-dihydrofolate + dTMP. The protein operates within pyrimidine metabolism; dTTP biosynthesis. In terms of biological role, catalyzes the reductive methylation of 2'-deoxyuridine-5'-monophosphate (dUMP) to 2'-deoxythymidine-5'-monophosphate (dTMP) while utilizing 5,10-methylenetetrahydrofolate (mTHF) as the methyl donor and reductant in the reaction, yielding dihydrofolate (DHF) as a by-product. This enzymatic reaction provides an intracellular de novo source of dTMP, an essential precursor for DNA biosynthesis. The polypeptide is Thymidylate synthase (Cupriavidus necator (strain ATCC 17699 / DSM 428 / KCTC 22496 / NCIMB 10442 / H16 / Stanier 337) (Ralstonia eutropha)).